The sequence spans 208 residues: Outer-membrane lipoprotein carrier protein (208 aa).

The signal sequence occupies residues 1–21 (MKRTATLLVVALILALNTAQA).

This sequence belongs to the LolA family. Monomer.

It localises to the periplasm. In terms of biological role, participates in the translocation of lipoproteins from the inner membrane to the outer membrane. Only forms a complex with a lipoprotein if the residue after the N-terminal Cys is not an aspartate (The Asp acts as a targeting signal to indicate that the lipoprotein should stay in the inner membrane). This chain is Outer-membrane lipoprotein carrier protein, found in Halorhodospira halophila (strain DSM 244 / SL1) (Ectothiorhodospira halophila (strain DSM 244 / SL1)).